The primary structure comprises 537 residues: Cytochrome P450 monooxygenase AOL_s00215g282 (537 aa).

A helical transmembrane segment spans residues 9–29 (ATVVLCGSIVTVSIAYVIFVV). N-linked (GlcNAc...) asparagine glycosylation occurs at N126. C451 is a binding site for heme.

This sequence belongs to the cytochrome P450 family. It depends on heme as a cofactor.

It localises to the membrane. Its pathway is secondary metabolite biosynthesis; terpenoid biosynthesis. Functionally, cytochrome P450 monooxygenase; part of the gene cluster that mediates the biosynthesis of sesquiterpenyl epoxy-cyclohexenoids (SECs) such as anthrobotrisins and arthrosporols, metabolites that possess a novel hybrid carbon skeleton consisting of a polyketide-derived epoxycyclohexenol combined with a terpenoid-derived monocyclic sesquiterpenol substructure (PKS-PTS hybrid). The SEC pathway plays an important role for fungal soil colonization via decreasing fungal nematode-capturing ability. Within the pathway, the cytochrome P450 monooxygenase AOL_s00215g282 acts as a m-cresol hydrolase that converts m-cresol to toluquinol. The pathway begins with the biosynthesis of 6-methylsalicylic acid (6-MSA), the first precursor of the polyketide-derived epoxycyclohexenol in arthrosporols, by the polyketide synthase (PKS) AOL_s00215g283 via condensation of 1 acetate and 3 malonate units. The 6-methylsalicylic acid decarboxylase AOL_s00215g281 then catalyzes the decarboxylation of 6-methylsalicylic acid to yield m-cresol. The cytochrome P450 monooxygenase AOL_s00215g282 further oxidizes m-cresol to yield toluquinol. With the assistance of the oxidoreductase AOL_s00215g277, the polyprenyl transferase AOL_s00215g276 catalyzes the farnesylation of toluquinol to produce farnesyl hydroquinone, the hybrid precursor for biosynthesis of SECs. Farnesyl hydroquinone undergoes epoxidation and then subsequent dehydrogenation to form farnesyl epoxy-quinone, the first and simplest SEC. The cytochrome P450 monooxygenase AOL_s00215g278 and the FAD-dependent monooxygenase AOL_s00215g279 might be involved in the oxygenation of the phenol moiety, most likely in the epoxy formation. The cytochrome P450 monooxygenases AOL_s00215g274 and AOL_s00215g280 are involved in specific regional ketone reductions at respectively C-4 and C-1 of farnesyl epoxy-quinone PubMed:33823587. This chain is Cytochrome P450 monooxygenase AOL_s00215g282, found in Arthrobotrys oligospora (strain ATCC 24927 / CBS 115.81 / DSM 1491) (Nematode-trapping fungus).